We begin with the raw amino-acid sequence, 1054 residues long: Bifunctional cytochrome P450/NADPH--P450 reductase 2 (1054 aa).

Residues 1 to 475 (MKQASAIPQP…QADIKAETKP (475 aa)) are cytochrome P450. Heme is bound at residue Cys-403. The span at 462-480 (QRKEQADIKAETKPKETKP) shows a compositional bias: basic and acidic residues. The tract at residues 462-482 (QRKEQADIKAETKPKETKPKH) is disordered. The interval 476 to 1053 (KETKPKHGTP…RRYVKDVWTG (578 aa)) is NADPH--P450 reductase. One can recognise a Flavodoxin-like domain in the interval 486–625 (LLVLFGSNLG…HRESWENRFW (140 aa)). FMN-binding positions include 492-497 (SNLGTA), 539-542 (SYNG), 573-575 (CGN), and 581-583 (TYQ). One can recognise an FAD-binding FR-type domain in the interval 663–896 (YGAFEGIVLE…RTPQSGFQMP (234 aa)).

This sequence in the N-terminal section; belongs to the cytochrome P450 family. It depends on FAD as a cofactor. The cofactor is FMN. Requires heme b as cofactor.

The protein resides in the cytoplasm. It catalyses the reaction an organic molecule + reduced [NADPH--hemoprotein reductase] + O2 = an alcohol + oxidized [NADPH--hemoprotein reductase] + H2O + H(+). The enzyme catalyses 2 oxidized [cytochrome P450] + NADPH = 2 reduced [cytochrome P450] + NADP(+) + H(+). Its function is as follows. Functions as a fatty acid monooxygenase. Catalyzes hydroxylation of a range of medium to long-chain fatty acids, with a preference for long-chain unsaturated and branched-chain fatty acids over saturated fatty acids. Hydroxylation of myristic acid occurs mainly at the omega-2 and omega-3 positions, in approximately equal proportions. Also displays a NADPH-dependent reductase activity in the C-terminal domain, which allows electron transfer from NADPH to the heme iron of the cytochrome P450 N-terminal domain. This Bacillus subtilis (strain 168) protein is Bifunctional cytochrome P450/NADPH--P450 reductase 2.